A 2522-amino-acid polypeptide reads, in one-letter code: Neurogenic locus notch homolog protein 1 (2522 aa).

The first 19 residues, 1-19 (MYRIGLLVLIWSLLGLAQG), serve as a signal peptide directing secretion. EGF-like domains follow at residues 20-57 (LRCT…ERCQ), 58-99 (YPNP…KVCL), 102-140 (VDNA…DSCQ), and 141-177 (QADP…ATCK). Residues 20-1730 (LRCTQTAEMC…ETAKPPPPLY (1711 aa)) lie on the Extracellular side of the membrane. Intrachain disulfides connect C22–C35, C29–C45, C47–C56, C62–C74, C68–C87, C89–C98, C106–C117, C111–C128, C130–C139, C145–C156, C150–C165, C167–C176, C183–C194, C188–C203, C205–C214, C221–C232, C226–C242, C244–C253, C260–C271, C265–C280, C282–C291, C298–C311, C305–C320, C322–C331, C338–C349, C343–C358, C360–C369, C375–C386, C380–C397, C399–C408, C415–C428, C422–C437, and C439–C448. Residues 179 to 215 (DINECSQNPCRNGGQCLNEFGSYRCNCQNRFTGRNCE) enclose the EGF-like 5; calcium-binding domain. The EGF-like 6 domain maps to 217–254 (PYVPCNPSPCLNGGTCRQTDDTSYECTCLPGFSGQNCE). T231 carries an O-linked (Fuc...) threonine; alternate glycan. O-linked (GalNAc...) threonine; alternate glycosylation occurs at T231. One can recognise an EGF-like 7; calcium-binding domain in the interval 256–292 (NIDDCPSNNCRNGGTCVDGVNTYNCQCPPDWTGQYCT). An EGF-like 8; calcium-binding domain is found at 294–332 (DVDECQLMPNACQNGGTCHNTYGGYNCVCVNGWTGEDCS). In terms of domain architecture, EGF-like 9; calcium-binding spans 334–370 (NIDDCANAACHSGATCHDRVASFFCECPHGRTGLLCH). The region spanning 371–409 (LDNACISNPCNEGSNCDTNPVNGKAICTCPPGYTGPACN) is the EGF-like 10 domain. Residues 411–449 (DVDECSLGANPCEHGGRCTNTLGSFQCNCPQGYAGPRCE) form the EGF-like 11; calcium-binding domain. The Ca(2+) site is built by T431 and S434. A glycan (O-linked (Glc...) serine) is linked at S434. D451, V452, and E454 together coordinate Ca(2+). One can recognise an EGF-like 12; calcium-binding domain in the interval 451-487 (DVNECLSNPCQNDATCLDQIGEFQCICMPGYEGLYCE). 3 disulfide bridges follow: C455–C466, C460–C475, and C477–C486. O-linked (Glc...) serine glycosylation is present at S457. T465 carries O-linked (Fuc...) threonine glycosylation. Ca(2+) is bound by residues D468 and Q469. Residues N489, I490, and E492 each contribute to the Ca(2+) site. Positions 489–525 (NIDECASNPCLHNGKCVDKINEFHCECPTGFNGNLCQ) constitute an EGF-like 13; calcium-binding domain. Intrachain disulfides connect C493–C504, C498–C513, C515–C524, C531–C542, C536–C551, C553–C562, C569–C579, C574–C588, C590–C599, C606–C617, C611–C626, C628–C637, C644–C654, C649–C663, C665–C674, C681–C692, C686–C701, C703–C712, C719–C729, C724–C738, C740–C749, C756–C767, C761–C776, C778–C787, C794–C805, C799–C814, C816–C825, C832–C843, C837–C854, C856–C865, C872–C883, C877–C892, C894–C903, C910–C921, C915–C930, C932–C941, C948–C959, C953–C968, C970–C979, C986–C997, C991–C1006, C1008–C1017, C1024–C1035, C1029–C1044, C1046–C1055, C1062–C1073, C1067–C1082, C1084–C1093, C1100–C1121, C1115–C1130, C1132–C1141, C1148–C1159, C1153–C1168, C1170–C1179, C1186–C1197, C1191–C1206, C1208–C1217, C1224–C1243, C1237–C1252, C1254–C1263, C1270–C1283, C1275–C1292, C1294–C1303, C1310–C1321, C1315–C1333, C1335–C1344, C1351–C1362, C1356–C1371, C1373–C1382, C1390–C1401, C1395–C1412, C1414–C1423, C1447–C1470, C1452–C1465, and C1461–C1477. O-linked (Glc...) serine glycosylation occurs at S495. Positions 506 and 507 each coordinate Ca(2+). Positions 527–563 (DVDECASTPCKNGAKCLDGPNSYTCQCTEGFTGRHCE) constitute an EGF-like 14; calcium-binding domain. Positions 565–600 (DINECIPDPCHYGTCKDGIATFTCLCRPGYTGRLCD) constitute an EGF-like 15; calcium-binding domain. In terms of domain architecture, EGF-like 16; calcium-binding spans 602 to 638 (DINECLSQPCQNGGQCTDRENGYICTCPKGTTGVNCE). In terms of domain architecture, EGF-like 17; calcium-binding spans 640 to 675 (NLDDCASNPCDYGKCIDKIDGYECTCEPGYTGKMCN). Positions 677-713 (NIDECASNPCRNGGTCKDKINGFTCVCPDGYHDHMCL) constitute an EGF-like 18; calcium-binding domain. Residues 715-750 (EVNECNSNPCIHGTCHDGINGYKCDCDAGWSGSNCD) form the EGF-like 19; calcium-binding domain. The EGF-like 20; calcium-binding domain maps to 752–788 (NNNECESNPCMNGGTCKDMTGAYICTCRAGFSGPNCQ). The EGF-like 21; calcium-binding domain occupies 790–826 (NINECASNPCLNRGTCIDDVAGYKCNCMLPYTGAICE). An EGF-like 22 domain is found at 828-866 (VLAPCSGSPCKNGGRCKESEDYETFSCECPPGWQGQTCE). The EGF-like 23; calcium-binding domain occupies 868–904 (DMNECVNRPCRNGAMCQNTNGSYKCNCKPGYAGRHCE). An N-linked (GlcNAc...) asparagine glycan is attached at N887. Residues 906–942 (DIDDCQPNPCHNGGSCSDGINMFFCNCPAGFRGPKCE) form the EGF-like 24; calcium-binding domain. The 37-residue stretch at 944 to 980 (DINECASNPCKNGANCTDCVNSYTCTCQPGFSGIHCE) folds into the EGF-like 25; calcium-binding domain. An N-linked (GlcNAc...) asparagine glycan is attached at N958. Residues 982-1018 (NTPDCTESSCFNGGTCIDGINTFSCQCPPGFTGNYCQ) enclose the EGF-like 26 domain. The region spanning 1020-1056 (DINECDSKPCLNGGTCQDSYGAYKCTCPQGYTGLNCQ) is the EGF-like 27; calcium-binding domain. EGF-like domains lie at 1058–1094 (LVRW…VYCD) and 1096–1142 (PSVS…SYCE). An EGF-like 30; calcium-binding domain is found at 1144–1180 (QVDECSPNPCQNGATCTDYLGGYSCECVAGYHGVNCS). N1178 is a glycosylation site (N-linked (GlcNAc...) asparagine). The region spanning 1182-1218 (EINECLSHPCHNGGTCIDLINTYKCSCPRGTQGVHCE) is the EGF-like 31; calcium-binding domain. Residues 1220–1264 (NVDDCTPFYDSVSLEPKCFNNGKCFDRVGGYNCICPPGFVGERCE) enclose the EGF-like 32; calcium-binding domain. EGF-like domains follow at residues 1266-1304 (DVNE…RRCD), 1306-1345 (VVDG…ATCE), 1347-1383 (DART…ATCQ), and 1386-1424 (VVSP…LFCH). T1400 is a glycosylation site (O-linked (Fuc...) threonine; alternate). T1400 carries O-linked (GalNAc...) threonine; alternate glycosylation. LNR repeat units follow at residues 1447 to 1487 (CENE…PWKN), 1488 to 1529 (CTQS…CNPL), and 1530 to 1564 (YDQY…NMPE). 3 residues coordinate Ca(2+): N1458, D1473, and D1476. An N-linked (GlcNAc...) asparagine glycan is attached at N1487. Disulfide bonds link C1488–C1512, C1494–C1507, C1503–C1519, C1534–C1547, and C1543–C1559. D1500 serves as a coordination point for Ca(2+). A glycan (N-linked (GlcNAc...) asparagine) is linked at N1508. Ca(2+) contacts are provided by D1515, D1518, D1540, D1555, and D1558. N-linked (GlcNAc...) asparagine glycosylation is present at N1584. Residues 1731–1751 (AMFSMLVIPLLIIFVIMVVIV) form a helical membrane-spanning segment. Topologically, residues 1752–2522 (NKKRRREHGQ…QRTHIPEAFK (771 aa)) are cytoplasmic. 6 ANK repeats span residues 1877-1920 (DGFT…QLHN), 1925-1954 (TGET…DANV), 1958-1988 (MGRT…DLDA), 1992-2021 (DGTT…DVNA), 2025-2054 (FGKS…NKDM), and 2058-2087 (KEET…NRDI). Disordered stretches follow at residues 2146 to 2229 (MKPS…MPLN), 2365 to 2404 (LMQA…PFCS), and 2449 to 2522 (LTPP…EAFK). A compositionally biased stretch (low complexity) spans 2184 to 2200 (SLLDSGSSGVLSPVDSL). Over residues 2218-2229 (SPFQQSPSMPLN) the composition is skewed to polar residues. A compositionally biased stretch (low complexity) spans 2365–2390 (LMQAQQMQQQQNLQLHQSVQQQQHQN). 2 stretches are compositionally biased toward polar residues: residues 2391–2404 (SNAT…PFCS) and 2449–2469 (LTPP…SHQL). A compositionally biased stretch (low complexity) spans 2479–2494 (PSPESPDQWSSSSPHS). Polar residues predominate over residues 2495-2514 (NMSDWSEGISSPPTSMQPQR).

This sequence belongs to the NOTCH family. In terms of processing, O-glycosylated on the EGF-like domains. Contains both O-linked fucose and O-linked glucose. O-linked glycosylation by galnt11 is involved in determination of left/right symmetry: glycosylation promotes activation of notch1, possibly by promoting cleavage by adam17, modulating the balance between motile and immotile (sensory) cilia at the left-right organiser (LRO). Post-translationally, synthesized in the endoplasmic reticulum as an inactive form which is proteolytically cleaved by a furin-like convertase in the trans-Golgi network before it reaches the plasma membrane to yield an active, ligand-accessible form. Cleavage results in a C-terminal fragment N(TM) and a N-terminal fragment N(EC). Following ligand binding, it is cleaved by adam17 to yield a membrane-associated intermediate fragment called notch extracellular truncation (NEXT). Following endocytosis, this fragment is then cleaved by presenilin dependent gamma-secretase to release a Notch-derived peptide containing the intracellular domain (NICD) from the membrane.

It is found in the cell membrane. Its subcellular location is the nucleus. In terms of biological role, functions as a receptor for membrane-bound ligands Jagged-1 (JAG1), Jagged-2 (JAG2) and Delta-1 (DLL1) to regulate cell-fate determination. Upon ligand activation through the released notch intracellular domain (NICD) it forms a transcriptional activator complex with RBPJ/RBPSUH and activates genes of the enhancer of split locus. Affects the implementation of differentiation, proliferation and apoptotic programs. Involved in angiogenesis; negatively regulates endothelial cell proliferation and migration and angiogenic sprouting. Involved in the maturation of both CD4(+) and CD8(+) cells in the thymus. Important for follicular differentiation and possibly cell fate selection within the follicle. During cerebellar development, functions as a receptor for neuronal DNER and is involved in the differentiation of Bergmann glia. Represses neuronal and myogenic differentiation. May play an essential role in postimplantation development, probably in some aspect of cell specification and/or differentiation. May be involved in mesoderm development, somite formation and neurogenesis. Involved in determination of left/right symmetry by modulating the balance between motile and immotile (sensory) cilia at the left-right organiser (LRO). The chain is Neurogenic locus notch homolog protein 1 (notch1) from Xenopus tropicalis (Western clawed frog).